The primary structure comprises 379 residues: Transcription termination factor 1b, mitochondrial (379 aa).

Residues 1-37 constitute a mitochondrion transit peptide; sequence MASRNIWCVRRNFLFDLRGWMLQYSAEVFLKSISFRT. Interaction with DNA stretches follow at residues 151 to 152, 229 to 233, 306 to 313, 337 to 340, and 366 to 373; these read RS, QSTKR, SEKKFNDK, SINT, and SQRRYEAK.

The protein belongs to the mTERF family. Monomer. Phosphoprotein with mostly four phosphate groups. While the DNA-binding activity is unaffected by the phosphorylation state, only the phosphorylated form of the protein is active for termination activity. Functioning seems to be regulated by phosphorylation. In terms of tissue distribution, expressed strongly in the heart and at lower levels in brain, liver and kidney.

The protein resides in the mitochondrion. Its function is as follows. Transcription termination factor. Binds to a 28 bp region within the tRNA(Leu(uur)) gene at a position immediately adjacent to and downstream of the 16S rRNA gene; this region comprises a tridecamer sequence critical for directing accurate termination. Binds DNA along the major grove and promotes DNA bending and partial unwinding. Promotes base flipping. Transcription termination activity appears to be polarized with highest specificity for transcripts initiated on the light strand. In Mus musculus (Mouse), this protein is Transcription termination factor 1b, mitochondrial.